The primary structure comprises 471 residues: Glutamate--tRNA ligase (471 aa).

The short motif at 9 to 19 is the 'HIGH' region element; the sequence is PSPTGYLHVGG. Residues C98, C100, C125, and H127 each contribute to the Zn(2+) site. Positions 237–241 match the 'KMSKS' region motif; the sequence is KLSKR. K240 lines the ATP pocket.

It belongs to the class-I aminoacyl-tRNA synthetase family. Glutamate--tRNA ligase type 1 subfamily. Monomer. Requires Zn(2+) as cofactor.

The protein localises to the cytoplasm. It carries out the reaction tRNA(Glu) + L-glutamate + ATP = L-glutamyl-tRNA(Glu) + AMP + diphosphate. Its function is as follows. Catalyzes the attachment of glutamate to tRNA(Glu) in a two-step reaction: glutamate is first activated by ATP to form Glu-AMP and then transferred to the acceptor end of tRNA(Glu). This Enterobacter sp. (strain 638) protein is Glutamate--tRNA ligase.